Consider the following 124-residue polypeptide: Holo-[acyl-carrier-protein] synthase (124 aa).

The Mg(2+) site is built by aspartate 7 and glutamate 55.

The protein belongs to the P-Pant transferase superfamily. AcpS family. Mg(2+) serves as cofactor.

It is found in the cytoplasm. It carries out the reaction apo-[ACP] + CoA = holo-[ACP] + adenosine 3',5'-bisphosphate + H(+). Transfers the 4'-phosphopantetheine moiety from coenzyme A to a Ser of acyl-carrier-protein. This chain is Holo-[acyl-carrier-protein] synthase, found in Borrelia garinii subsp. bavariensis (strain ATCC BAA-2496 / DSM 23469 / PBi) (Borreliella bavariensis).